A 269-amino-acid polypeptide reads, in one-letter code: Putative ankyrin repeat protein L23 (269 aa).

ANK repeat units lie at residues E118–S147, D148–A177, N179–E207, Q208–A237, and D238–A267.

This Acanthamoeba polyphaga (Amoeba) protein is Putative ankyrin repeat protein L23.